Consider the following 657-residue polypeptide: Heat shock protein hsp-6 (657 aa).

Residues 1-27 (MLSARSFLSSARTIARSSLMSARSLSD) constitute a mitochondrion transit peptide. The tract at residues 637 to 657 (KNSGGDAQEAKTAEEPKKEQN) is disordered. Residues 644–657 (QEAKTAEEPKKEQN) are compositionally biased toward basic and acidic residues.

Belongs to the heat shock protein 70 family.

It localises to the mitochondrion. The polypeptide is Heat shock protein hsp-6 (Caenorhabditis elegans).